A 201-amino-acid chain; its full sequence is 3-isopropylmalate dehydratase small subunit (201 aa).

Belongs to the LeuD family. LeuD type 1 subfamily. As to quaternary structure, heterodimer of LeuC and LeuD.

It carries out the reaction (2R,3S)-3-isopropylmalate = (2S)-2-isopropylmalate. Its pathway is amino-acid biosynthesis; L-leucine biosynthesis; L-leucine from 3-methyl-2-oxobutanoate: step 2/4. Catalyzes the isomerization between 2-isopropylmalate and 3-isopropylmalate, via the formation of 2-isopropylmaleate. This chain is 3-isopropylmalate dehydratase small subunit, found in Mesorhizobium japonicum (strain LMG 29417 / CECT 9101 / MAFF 303099) (Mesorhizobium loti (strain MAFF 303099)).